Here is a 217-residue protein sequence, read N- to C-terminus: Small ribosomal subunit protein uS11m (217 aa).

A mitochondrion-targeting transit peptide spans 1–59; the sequence is MLLQPVWKGCRWTQFVRPIRRWNSTGTNRGVPFSFKDISNQEDITNISYPSSSDSVLTK.

Belongs to the universal ribosomal protein uS11 family. In terms of assembly, component of the mitochondrial small ribosomal subunit (mt-SSU). Mature yeast 74S mitochondrial ribosomes consist of a small (37S) and a large (54S) subunit. The 37S small subunit contains a 15S ribosomal RNA (15S mt-rRNA) and 34 different proteins. The 54S large subunit contains a 21S rRNA (21S mt-rRNA) and 46 different proteins.

It localises to the mitochondrion. In terms of biological role, component of the mitochondrial ribosome (mitoribosome), a dedicated translation machinery responsible for the synthesis of mitochondrial genome-encoded proteins, including at least some of the essential transmembrane subunits of the mitochondrial respiratory chain. The mitoribosomes are attached to the mitochondrial inner membrane and translation products are cotranslationally integrated into the membrane. This chain is Small ribosomal subunit protein uS11m (MRPS18), found in Saccharomyces cerevisiae (strain ATCC 204508 / S288c) (Baker's yeast).